Consider the following 149-residue polypeptide: UPF0260 protein PSPTO_3918 (149 aa).

Belongs to the UPF0260 family.

The chain is UPF0260 protein PSPTO_3918 from Pseudomonas syringae pv. tomato (strain ATCC BAA-871 / DC3000).